A 279-amino-acid chain; its full sequence is DegV domain-containing protein SA1258 (279 aa).

Residues 4-278 (QIIVTDSTSD…QGAIGLVVLK (275 aa)) enclose the DegV domain. Residues Thr61 and Ser93 each coordinate hexadecanoate.

Its function is as follows. May bind long-chain fatty acids, such as palmitate, and may play a role in lipid transport or fatty acid metabolism. The chain is DegV domain-containing protein SA1258 from Staphylococcus aureus (strain N315).